Consider the following 327-residue polypeptide: DNA-directed RNA polymerase subunit alpha (327 aa).

Residues 1 to 233 (MVREKVKVST…NLFIPFLHVE (233 aa)) form an alpha N-terminal domain (alpha-NTD) region. The segment at 267–327 (LAFQYIFIDQ…KKILDILEKK (61 aa)) is alpha C-terminal domain (alpha-CTD).

It belongs to the RNA polymerase alpha chain family. In plastids the minimal PEP RNA polymerase catalytic core is composed of four subunits: alpha, beta, beta', and beta''. When a (nuclear-encoded) sigma factor is associated with the core the holoenzyme is formed, which can initiate transcription.

The protein localises to the plastid. It localises to the chloroplast. It carries out the reaction RNA(n) + a ribonucleoside 5'-triphosphate = RNA(n+1) + diphosphate. Functionally, DNA-dependent RNA polymerase catalyzes the transcription of DNA into RNA using the four ribonucleoside triphosphates as substrates. The polypeptide is DNA-directed RNA polymerase subunit alpha (Draba nemorosa (Woodland whitlowgrass)).